A 61-amino-acid polypeptide reads, in one-letter code: Conotoxin Tx-D021 (61 aa).

The signal sequence occupies residues 1 to 22; that stretch reads MRCLPVFVILLLLIASTPSVDA. Positions 23-48 are excised as a propeptide; the sequence is RAKTRDDMSLASFHDDAKRILQILQD. Position 60 is a cysteine amide (C60).

The protein belongs to the conotoxin T superfamily. Contains 2 disulfide bonds that can be either 'C1-C3, C2-C4' or 'C1-C4, C2-C3', since these disulfide connectivities have been observed for conotoxins with cysteine framework V (for examples, see AC P0DQQ7 and AC P81755). Expressed by the venom duct.

Its subcellular location is the secreted. This chain is Conotoxin Tx-D021, found in Conus textile (Cloth-of-gold cone).